The sequence spans 608 residues: Serine/threonine-protein kinase SSN3 (608 aa).

The disordered stretch occupies residues 1–72; it reads MSYSSASFRK…PGTVGTRTSI (72 aa). Positions 17-47 are enriched in low complexity; the sequence is SQPSQTTTTTTSANQPQSQSQQQPLQQSQQQ. A compositionally biased stretch (basic residues) spans 49–59; it reads LHMKPNPHIPH. Residues 104–492 enclose the Protein kinase domain; that stretch reads YQIMGYIAAG…ADQALLHPYF (389 aa). Residues 110–118 and K182 each bind ATP; that span reads IAAGTYGKV. The active-site Proton acceptor is the D307. The disordered stretch occupies residues 523–608; the sequence is MTTAANNNNN…LPGGIRKKRG (86 aa). Residues 528–583 are compositionally biased toward low complexity; that stretch reads NNNNNNNNNNNNNNNNNNNNNNNNNNNSGHQLSQQQNVQIQQVHQMQQQIHSQQLQ.

It belongs to the protein kinase superfamily. CMGC Ser/Thr protein kinase family. CDC2/CDKX subfamily. As to quaternary structure, component of the SRB8-11 complex, a regulatory module of the Mediator complex. Mg(2+) serves as cofactor.

The protein localises to the nucleus. The catalysed reaction is L-seryl-[protein] + ATP = O-phospho-L-seryl-[protein] + ADP + H(+). The enzyme catalyses L-threonyl-[protein] + ATP = O-phospho-L-threonyl-[protein] + ADP + H(+). It catalyses the reaction [DNA-directed RNA polymerase] + ATP = phospho-[DNA-directed RNA polymerase] + ADP + H(+). Its function is as follows. Component of the SRB8-11 complex. The SRB8-11 complex is a regulatory module of the Mediator complex which is itself involved in regulation of basal and activated RNA polymerase II-dependent transcription. The SRB8-11 complex may be involved in the transcriptional repression of a subset of genes regulated by Mediator. It may inhibit the association of the Mediator complex with RNA polymerase II to form the holoenzyme complex. The SRB8-11 complex phosphorylates the C-terminal domain (CTD) of the largest subunit of RNA polymerase II. The chain is Serine/threonine-protein kinase SSN3 (SSN3) from Candida albicans (strain SC5314 / ATCC MYA-2876) (Yeast).